The sequence spans 429 residues: Glutamate-1-semialdehyde 2,1-aminomutase (429 aa).

Lys-267 bears the N6-(pyridoxal phosphate)lysine mark.

It belongs to the class-III pyridoxal-phosphate-dependent aminotransferase family. HemL subfamily. Homodimer. It depends on pyridoxal 5'-phosphate as a cofactor.

Its subcellular location is the cytoplasm. It carries out the reaction (S)-4-amino-5-oxopentanoate = 5-aminolevulinate. It participates in porphyrin-containing compound metabolism; protoporphyrin-IX biosynthesis; 5-aminolevulinate from L-glutamyl-tRNA(Glu): step 2/2. This Xanthomonas euvesicatoria pv. vesicatoria (strain 85-10) (Xanthomonas campestris pv. vesicatoria) protein is Glutamate-1-semialdehyde 2,1-aminomutase.